The chain runs to 535 residues: UDP-glycosyltransferase stmC (535 aa).

N-linked (GlcNAc...) asparagine glycosylation is found at Asn-70 and Asn-422. The chain crosses the membrane as a helical span at residues 506 to 526 (ASNLDLYIVCIAFVAVPVGVA).

Belongs to the glycosyltransferase 28 family.

The protein resides in the membrane. It carries out the reaction stromemycin aglycone + UDP-alpha-D-glucose = stromemycin + UDP + H(+). The catalysed reaction is exophillate aglycone + UDP-alpha-D-glucose = exophillate + UDP + H(+). It participates in mycotoxin biosynthesis. Functionally, UDP-glycosyltransferase; part of the gene cluster that mediates the biosynthesis of stromemycin, a depside C-glucoside with two unsaturated C9 side chains belonging to aromatic polyketide glycosides. Acts as the tailoring enzyme responsible for 3-C-glucosylation of bininalkenylresorcylic acid produced by the combined action of the HR-PKS stmA and the NR-PKS stmB to yield stromemycin. Possesses a relatively strict acceptor specificity towards bininalkenylresorcylic acid for C-glycosylation, but is able to use several donors including UDP-alpha-D-galactose, UDP-alpha-D-xylose, UDP-alpha-D-4-keto-6-deoxyglucose, UDP-alpha-D-quinovose, and UDP-beta-L-rhamnose. In Aspergillus ustus, this protein is UDP-glycosyltransferase stmC.